We begin with the raw amino-acid sequence, 376 residues long: Acetate kinase (376 aa).

Asparagine 7 serves as a coordination point for Mg(2+). Lysine 14 lines the ATP pocket. Arginine 71 lines the substrate pocket. The active-site Proton donor/acceptor is aspartate 128. Residues 188-192 (HLGNG), 262-264 (DFR), and 310-314 (GVGEN) contribute to the ATP site. Residue glutamate 364 participates in Mg(2+) binding.

The protein belongs to the acetokinase family. In terms of assembly, homodimer. Requires Mg(2+) as cofactor. The cofactor is Mn(2+).

Its subcellular location is the cytoplasm. It carries out the reaction acetate + ATP = acetyl phosphate + ADP. Its pathway is metabolic intermediate biosynthesis; acetyl-CoA biosynthesis; acetyl-CoA from acetate: step 1/2. Catalyzes the formation of acetyl phosphate from acetate and ATP. Can also catalyze the reverse reaction. This Mycolicibacterium smegmatis (strain ATCC 700084 / mc(2)155) (Mycobacterium smegmatis) protein is Acetate kinase.